A 406-amino-acid chain; its full sequence is 2,3-bisphosphoglycerate-independent phosphoglycerate mutase (406 aa).

Positions 164-184 (VSSNDPKKTGVQPKTIHPDDD) are disordered.

The protein belongs to the BPG-independent phosphoglycerate mutase family. A-PGAM subfamily.

It carries out the reaction (2R)-2-phosphoglycerate = (2R)-3-phosphoglycerate. The protein operates within carbohydrate degradation; glycolysis; pyruvate from D-glyceraldehyde 3-phosphate: step 3/5. Catalyzes the interconversion of 2-phosphoglycerate and 3-phosphoglycerate. The chain is 2,3-bisphosphoglycerate-independent phosphoglycerate mutase from Methanocorpusculum labreanum (strain ATCC 43576 / DSM 4855 / Z).